We begin with the raw amino-acid sequence, 298 residues long: N-acetylmuramic acid 6-phosphate etherase (298 aa).

Positions Ile-55–Lys-218 constitute an SIS domain. Glu-83 functions as the Proton donor in the catalytic mechanism. Residue Glu-114 is part of the active site.

It belongs to the GCKR-like family. MurNAc-6-P etherase subfamily. In terms of assembly, homodimer.

The catalysed reaction is N-acetyl-D-muramate 6-phosphate + H2O = N-acetyl-D-glucosamine 6-phosphate + (R)-lactate. It participates in amino-sugar metabolism; N-acetylmuramate degradation. Its function is as follows. Specifically catalyzes the cleavage of the D-lactyl ether substituent of MurNAc 6-phosphate, producing GlcNAc 6-phosphate and D-lactate. The polypeptide is N-acetylmuramic acid 6-phosphate etherase (Mycolicibacterium smegmatis (strain ATCC 700084 / mc(2)155) (Mycobacterium smegmatis)).